Here is a 171-residue protein sequence, read N- to C-terminus: AP-3 complex subunit sigma (171 aa).

This sequence belongs to the adaptor complexes small subunit family. As to quaternary structure, adaptor protein complex 3 (AP-3) is a heterotetramer composed of two large adaptins (delta-type subunit and beta-type subunit), a medium adaptin (mu-type subunit) and a small adaptin (sigma-type subunit).

It localises to the endosome membrane. Functionally, part of the AP-3 complex, an adaptor-related complex which is essential for the compartmentalization of the endocytic pathway. The sequence is that of AP-3 complex subunit sigma (ap3s1) from Dictyostelium discoideum (Social amoeba).